Here is a 218-residue protein sequence, read N- to C-terminus: Ras-related protein RABA5e (218 aa).

Residue 19–26 participates in GTP binding; the sequence is GDSAVGKS. An Effector region motif is present at residues 41-49; that stretch reads SKATIGVEF. Residues 67–71, 125–128, and 155–156 contribute to the GTP site; these read DTAGQ, NKCD, and SA. 2 S-geranylgeranyl cysteine lipidation sites follow: cysteine 214 and cysteine 215. A Cysteine methyl ester modification is found at cysteine 215. Residues 216–218 constitute a propeptide, removed in mature form; sequence SST.

The protein belongs to the small GTPase superfamily. Rab family.

It is found in the cell membrane. Intracellular vesicle trafficking and protein transport. The sequence is that of Ras-related protein RABA5e (RABA5E) from Arabidopsis thaliana (Mouse-ear cress).